We begin with the raw amino-acid sequence, 316 residues long: Ribosomal RNA small subunit methyltransferase H (316 aa).

S-adenosyl-L-methionine contacts are provided by residues 35-37 (GGH), D55, F79, D101, and Q108.

This sequence belongs to the methyltransferase superfamily. RsmH family.

It is found in the cytoplasm. It carries out the reaction cytidine(1402) in 16S rRNA + S-adenosyl-L-methionine = N(4)-methylcytidine(1402) in 16S rRNA + S-adenosyl-L-homocysteine + H(+). Its function is as follows. Specifically methylates the N4 position of cytidine in position 1402 (C1402) of 16S rRNA. This is Ribosomal RNA small subunit methyltransferase H from Vibrio parahaemolyticus serotype O3:K6 (strain RIMD 2210633).